The primary structure comprises 270 residues: Phosphoribosylformylglycinamidine synthase subunit PurQ (270 aa).

The region spanning 5 to 251 (ALVLHATGTN…VIRERDSEEE (247 aa)) is the Glutamine amidotransferase type-1 domain. Residue Cys95 is the Nucleophile of the active site. Active-site residues include His236 and Glu238.

As to quaternary structure, part of the FGAM synthase complex composed of 1 PurL, 1 PurQ and 2 PurS subunits.

Its subcellular location is the cytoplasm. It catalyses the reaction N(2)-formyl-N(1)-(5-phospho-beta-D-ribosyl)glycinamide + L-glutamine + ATP + H2O = 2-formamido-N(1)-(5-O-phospho-beta-D-ribosyl)acetamidine + L-glutamate + ADP + phosphate + H(+). The catalysed reaction is L-glutamine + H2O = L-glutamate + NH4(+). Its pathway is purine metabolism; IMP biosynthesis via de novo pathway; 5-amino-1-(5-phospho-D-ribosyl)imidazole from N(2)-formyl-N(1)-(5-phospho-D-ribosyl)glycinamide: step 1/2. In terms of biological role, part of the phosphoribosylformylglycinamidine synthase complex involved in the purines biosynthetic pathway. Catalyzes the ATP-dependent conversion of formylglycinamide ribonucleotide (FGAR) and glutamine to yield formylglycinamidine ribonucleotide (FGAM) and glutamate. The FGAM synthase complex is composed of three subunits. PurQ produces an ammonia molecule by converting glutamine to glutamate. PurL transfers the ammonia molecule to FGAR to form FGAM in an ATP-dependent manner. PurS interacts with PurQ and PurL and is thought to assist in the transfer of the ammonia molecule from PurQ to PurL. This Treponema denticola (strain ATCC 35405 / DSM 14222 / CIP 103919 / JCM 8153 / KCTC 15104) protein is Phosphoribosylformylglycinamidine synthase subunit PurQ.